Consider the following 434-residue polypeptide: DNA primase large subunit PriL (434 aa).

Positions 281, 392, 403, and 409 each coordinate [4Fe-4S] cluster.

The protein belongs to the eukaryotic-type primase large subunit family. Heterodimer of a small subunit (PriS) and a large subunit (PriL). The cofactor is [4Fe-4S] cluster.

Regulatory subunit of DNA primase, an RNA polymerase that catalyzes the synthesis of short RNA molecules used as primers for DNA polymerase during DNA replication. Stabilizes and modulates the activity of the small subunit, increasing the rate of DNA synthesis, and conferring RNA synthesis capability. The DNA polymerase activity may enable DNA primase to also catalyze primer extension after primer synthesis. May also play a role in DNA repair. The polypeptide is DNA primase large subunit PriL (Methanothermobacter thermautotrophicus (strain ATCC 29096 / DSM 1053 / JCM 10044 / NBRC 100330 / Delta H) (Methanobacterium thermoautotrophicum)).